The sequence spans 83 residues: MAHKKAGGSSKNGRDSRGQRRGVKRFGGEKVRAGNILVRQLGTHFHPGNNVGLGRDYTLFAKIDGVVTYESSGARKQVSVYAD.

Residues 1-26 are disordered; it reads MAHKKAGGSSKNGRDSRGQRRGVKRF.

The protein belongs to the bacterial ribosomal protein bL27 family.

This chain is Large ribosomal subunit protein bL27, found in Desulfosudis oleivorans (strain DSM 6200 / JCM 39069 / Hxd3) (Desulfococcus oleovorans).